The chain runs to 274 residues: 2,3,4,5-tetrahydropyridine-2,6-dicarboxylate N-succinyltransferase (274 aa).

Substrate-binding residues include R104 and D141.

The protein belongs to the transferase hexapeptide repeat family. In terms of assembly, homotrimer.

The protein localises to the cytoplasm. The enzyme catalyses (S)-2,3,4,5-tetrahydrodipicolinate + succinyl-CoA + H2O = (S)-2-succinylamino-6-oxoheptanedioate + CoA. The protein operates within amino-acid biosynthesis; L-lysine biosynthesis via DAP pathway; LL-2,6-diaminopimelate from (S)-tetrahydrodipicolinate (succinylase route): step 1/3. The chain is 2,3,4,5-tetrahydropyridine-2,6-dicarboxylate N-succinyltransferase from Shewanella halifaxensis (strain HAW-EB4).